The primary structure comprises 156 residues: MPRRREVPKREILPDPKFGNQEVSKFMNVVMSSGKKSVAERIVYGAFEQITTKSGKDPLEVFSTALNNARPLVEVKSRRVGGANYQVPVEVRSSRRTALAMRWLKDAARKRGEKSMGARLAGELLDAAEGRGGAVKKREEVHRMAEANKAFSHFRF.

It belongs to the universal ribosomal protein uS7 family. Part of the 30S ribosomal subunit. Contacts proteins S9 and S11.

One of the primary rRNA binding proteins, it binds directly to 16S rRNA where it nucleates assembly of the head domain of the 30S subunit. Is located at the subunit interface close to the decoding center, probably blocks exit of the E-site tRNA. This chain is Small ribosomal subunit protein uS7, found in Thiobacillus denitrificans (strain ATCC 25259 / T1).